Consider the following 492-residue polypeptide: Ketol-acid reductoisomerase (NADP(+)) (492 aa).

Residues 15-208 enclose the KARI N-terminal Rossmann domain; the sequence is AQLGKCRFMA…GGHRAGVLES (194 aa). Residues 45 to 48, R68, R76, S78, and 108 to 110 each bind NADP(+); these read CGAQ and DKQ. H132 is an active-site residue. G158 contacts NADP(+). 2 consecutive KARI C-terminal knotted domains span residues 209-344 and 345-485; these read SFVA…TAAQ and FEGK…MTDM. D217, E221, E389, and E393 together coordinate Mg(2+). Substrate is bound at residue S414.

The protein belongs to the ketol-acid reductoisomerase family. Requires Mg(2+) as cofactor.

The catalysed reaction is (2R)-2,3-dihydroxy-3-methylbutanoate + NADP(+) = (2S)-2-acetolactate + NADPH + H(+). The enzyme catalyses (2R,3R)-2,3-dihydroxy-3-methylpentanoate + NADP(+) = (S)-2-ethyl-2-hydroxy-3-oxobutanoate + NADPH + H(+). It functions in the pathway amino-acid biosynthesis; L-isoleucine biosynthesis; L-isoleucine from 2-oxobutanoate: step 2/4. The protein operates within amino-acid biosynthesis; L-valine biosynthesis; L-valine from pyruvate: step 2/4. Functionally, involved in the biosynthesis of branched-chain amino acids (BCAA). Catalyzes an alkyl-migration followed by a ketol-acid reduction of (S)-2-acetolactate (S2AL) to yield (R)-2,3-dihydroxy-isovalerate. In the isomerase reaction, S2AL is rearranged via a Mg-dependent methyl migration to produce 3-hydroxy-3-methyl-2-ketobutyrate (HMKB). In the reductase reaction, this 2-ketoacid undergoes a metal-dependent reduction by NADPH to yield (R)-2,3-dihydroxy-isovalerate. This Erwinia tasmaniensis (strain DSM 17950 / CFBP 7177 / CIP 109463 / NCPPB 4357 / Et1/99) protein is Ketol-acid reductoisomerase (NADP(+)).